A 405-amino-acid polypeptide reads, in one-letter code: Mevalonate 3,5-bisphosphate decarboxylase (405 aa).

Belongs to the mevalonate 3,5-bisphosphate decarboxylase family. As to quaternary structure, homodimer.

The catalysed reaction is (R)-3,5-bisphosphomevalonate + H(+) = isopentenyl phosphate + phosphate + CO2. Its pathway is isoprenoid biosynthesis; isopentenyl diphosphate biosynthesis via mevalonate pathway. In terms of biological role, catalyzes the ATP-independent decarboxylation of (R)-mevalonate 3,5-bisphosphate to isopentenyl phosphate. Functions in an alternative mevalonate pathway, only present in extreme acidophiles of the Thermoplasmatales order, which passes through mevalonate 3-phosphate rather than mevalonate 5-phosphate. The polypeptide is Mevalonate 3,5-bisphosphate decarboxylase (Thermoplasma acidophilum (strain ATCC 25905 / DSM 1728 / JCM 9062 / NBRC 15155 / AMRC-C165)).